The following is a 141-amino-acid chain: Lutropin subunit beta (141 aa).

The signal sequence occupies residues 1–20 (MEMFQGLLLWLLLGVAGVWA). Disulfide bonds link C29/C77, C43/C92, C46/C130, C54/C108, C58/C110, and C113/C120. N-linked (GlcNAc...) asparagine glycosylation occurs at N33.

Belongs to the glycoprotein hormones subunit beta family. Heterodimer of a common alpha chain and a unique beta chain which confers biological specificity to thyrotropin, lutropin, follitropin and gonadotropin.

Its subcellular location is the secreted. Functionally, promotes spermatogenesis and ovulation by stimulating the testes and ovaries to synthesize steroids. The sequence is that of Lutropin subunit beta (LHB) from Bos taurus (Bovine).